The chain runs to 72 residues: MAKDDVIEVEGTIVETLPNAMFKVELENGHTVLAHVSGKIRMHFIRILPGDKVTVELSPYDLTRGRITYRYK.

Residues 2–72 (AKDDVIEVEG…TRGRITYRYK (71 aa)) enclose the S1-like domain. Y60 bears the Phosphotyrosine mark.

Belongs to the IF-1 family. In terms of assembly, component of the 30S ribosomal translation pre-initiation complex which assembles on the 30S ribosome in the order IF-2 and IF-3, IF-1 and N-formylmethionyl-tRNA(fMet); mRNA recruitment can occur at any time during PIC assembly.

Its subcellular location is the cytoplasm. One of the essential components for the initiation of protein synthesis. Stabilizes the binding of IF-2 and IF-3 on the 30S subunit to which N-formylmethionyl-tRNA(fMet) subsequently binds. Helps modulate mRNA selection, yielding the 30S pre-initiation complex (PIC). Upon addition of the 50S ribosomal subunit IF-1, IF-2 and IF-3 are released leaving the mature 70S translation initiation complex. The protein is Translation initiation factor IF-1 of Bacillus subtilis (strain 168).